The following is a 428-amino-acid chain: MTEAMKITLSHEPADARWGEKALYSFTQDGIALHLTGKDDLGLIQRAGRKIDGQGLKHVELAGDGWDVEKSWAFWMGYRGPKGKRTVTWAPLDDAQQKELNNRLKVIDWVRDVINAPAEEMGPEHLAQRAVDLLADVGGERVSYRITKGEDLREQNYMGLHTVGRGSERPPVLLALDFNPTGDANAPVFACLVGKGITFDSGGYSIKQTAFMDSMKSDMGGAALVTGSLAFAITRGLNKRVKLILCCADNMISGNAFRLGDIIRYRNGKTVEVMNTDAEGRLVLADGLIDASAQKPALIIDAATLTGAAKTALGNDYHALFSFDDALANRLLQSAQAENEAFWRLPLAEFHRNQLPSNFAELNNTAGGAYPAGASTAAGFLSHFVENYQQGWLHIDCSATYRKAAVEQWAAGATGIGVRTLANLLTAE.

Positions 195 and 200 each coordinate Mn(2+). Residue Lys-207 is part of the active site. Residues Asp-218, Asp-277, and Glu-279 each contribute to the Mn(2+) site. The active site involves Arg-281.

The protein belongs to the peptidase M17 family. As to quaternary structure, homohexamer. It depends on Mn(2+) as a cofactor.

The protein resides in the cytoplasm. It carries out the reaction Release of an N-terminal amino acid, Xaa, from a peptide or arylamide. Xaa is preferably Glu or Asp but may be other amino acids, including Leu, Met, His, Cys and Gln.. Functionally, probably plays an important role in intracellular peptide degradation. This Cronobacter sakazakii (strain ATCC BAA-894) (Enterobacter sakazakii) protein is Peptidase B.